Reading from the N-terminus, the 158-residue chain is Cytochrome b6-f complex subunit 4 (158 aa).

A run of 3 helical transmembrane segments spans residues 34–54 (LLYISPVVILGTIACNVGLAV), 93–113 (LLGVLLMVSVPTGLLTVPFLE), and 129–149 (TVFLIGTVIALWLGIGATLPI).

This sequence belongs to the cytochrome b family. PetD subfamily. The 4 large subunits of the cytochrome b6-f complex are cytochrome b6, subunit IV (17 kDa polypeptide, petD), cytochrome f and the Rieske protein, while the 4 small subunits are petG, petL, petM and petN. The complex functions as a dimer.

The protein localises to the plastid. It is found in the chloroplast thylakoid membrane. Component of the cytochrome b6-f complex, which mediates electron transfer between photosystem II (PSII) and photosystem I (PSI), cyclic electron flow around PSI, and state transitions. The protein is Cytochrome b6-f complex subunit 4 of Liriodendron tulipifera (Tuliptree).